Reading from the N-terminus, the 248-residue chain is Probable transcriptional regulatory protein Smed_2641 (248 aa).

This sequence belongs to the TACO1 family.

Its subcellular location is the cytoplasm. The polypeptide is Probable transcriptional regulatory protein Smed_2641 (Sinorhizobium medicae (strain WSM419) (Ensifer medicae)).